A 203-amino-acid polypeptide reads, in one-letter code: Large ribosomal subunit protein uL18 (203 aa).

This sequence belongs to the universal ribosomal protein uL18 family. In terms of assembly, part of the 50S ribosomal subunit. Contacts the 5S and 23S rRNAs.

Its function is as follows. This is one of the proteins that bind and probably mediate the attachment of the 5S RNA into the large ribosomal subunit, where it forms part of the central protuberance. The polypeptide is Large ribosomal subunit protein uL18 (Pyrococcus horikoshii (strain ATCC 700860 / DSM 12428 / JCM 9974 / NBRC 100139 / OT-3)).